The following is a 168-amino-acid chain: CDP-archaeol synthase (168 aa).

The next 5 helical transmembrane spans lie at 4–24, 51–71, 81–101, 112–132, and 138–158; these read IFEA…PVVL, GFFG…LMFP, VGVA…GSFI, PAVG…AYPL, and GEVL…NVFA.

This sequence belongs to the CDP-archaeol synthase family. Mg(2+) is required as a cofactor.

The protein resides in the cell membrane. It catalyses the reaction 2,3-bis-O-(geranylgeranyl)-sn-glycerol 1-phosphate + CTP + H(+) = CDP-2,3-bis-O-(geranylgeranyl)-sn-glycerol + diphosphate. Its pathway is membrane lipid metabolism; glycerophospholipid metabolism. In terms of biological role, catalyzes the formation of CDP-2,3-bis-(O-geranylgeranyl)-sn-glycerol (CDP-archaeol) from 2,3-bis-(O-geranylgeranyl)-sn-glycerol 1-phosphate (DGGGP) and CTP. This reaction is the third ether-bond-formation step in the biosynthesis of archaeal membrane lipids. The protein is CDP-archaeol synthase of Pyrococcus abyssi (strain GE5 / Orsay).